A 530-amino-acid polypeptide reads, in one-letter code: Glucocorticoid modulatory element-binding protein 2 (530 aa).

Positions 81 to 163 (EEGENLEAEI…RKIMDSGELD (83 aa)) constitute an SAND domain. Residue Cys110 participates in Zn(2+) binding. Residues Lys136, Lys140, Lys143, and Arg154 each contribute to the DNA site. Lys155 is covalently cross-linked (Glycyl lysine isopeptide (Lys-Gly) (interchain with G-Cter in SUMO1); alternate). A Glycyl lysine isopeptide (Lys-Gly) (interchain with G-Cter in SUMO2); alternate cross-link involves residue Lys155. Residues His167, Cys171, and Cys175 each contribute to the Zn(2+) site. A coiled-coil region spans residues 304–348 (QMDRSREQYARDLAALEQQCDEHRRRAKELKHKSQHLSNVLMTLT). Ser373 is modified (phosphoserine).

Homodimer, and heterodimer of GMEB1 and GMEB2. GMEB1 and GMEB2 form the parvovirus initiator complex (PIF). Interacts with the glucocorticoid receptor (NR3C1). May interact with CREB-binding protein (CBP). Expressed in peripheral blood lymphocytes and fetal liver. Expressed preferentially in reproductive and/or developmentally important cells, such as testis, placenta, bone marrow and fetal tissues.

Its subcellular location is the nucleus. It is found in the cytoplasm. Functionally, trans-acting factor that binds to glucocorticoid modulatory elements (GME) present in the TAT (tyrosine aminotransferase) promoter and increases sensitivity to low concentrations of glucocorticoids. Also binds to the transferrin receptor promoter. Essential auxiliary factor for the replication of parvoviruses. The chain is Glucocorticoid modulatory element-binding protein 2 (GMEB2) from Homo sapiens (Human).